A 77-amino-acid polypeptide reads, in one-letter code: DNA-directed RNA polymerase subunit omega (77 aa).

Belongs to the RNA polymerase subunit omega family. As to quaternary structure, the RNAP catalytic core consists of 2 alpha, 1 beta, 1 beta' and 1 omega subunit. When a sigma factor is associated with the core the holoenzyme is formed, which can initiate transcription.

The catalysed reaction is RNA(n) + a ribonucleoside 5'-triphosphate = RNA(n+1) + diphosphate. Promotes RNA polymerase assembly. Latches the N- and C-terminal regions of the beta' subunit thereby facilitating its interaction with the beta and alpha subunits. This is DNA-directed RNA polymerase subunit omega from Nitratidesulfovibrio vulgaris (strain ATCC 29579 / DSM 644 / CCUG 34227 / NCIMB 8303 / VKM B-1760 / Hildenborough) (Desulfovibrio vulgaris).